We begin with the raw amino-acid sequence, 258 residues long: Isoprenyl transferase (258 aa).

Aspartate 38 is an active-site residue. Aspartate 38 lines the Mg(2+) pocket. Substrate contacts are provided by residues 39–42 (GNGR), tryptophan 43, arginine 51, histidine 55, and 83–85 (STE). The active-site Proton acceptor is the asparagine 86. Substrate-binding positions include tryptophan 87, arginine 89, arginine 206, and 212–214 (RIS). Glutamate 225 lines the Mg(2+) pocket.

The protein belongs to the UPP synthase family. As to quaternary structure, homodimer. The cofactor is Mg(2+).

In terms of biological role, catalyzes the condensation of isopentenyl diphosphate (IPP) with allylic pyrophosphates generating different type of terpenoids. This chain is Isoprenyl transferase, found in Bacillus thuringiensis subsp. konkukian (strain 97-27).